The primary structure comprises 325 residues: GMP reductase (325 aa).

Cys174 serves as the catalytic Thioimidate intermediate. 203 to 226 (IIADGGIRTHGDIAKSVRFGATMV) contributes to the NADP(+) binding site.

It belongs to the IMPDH/GMPR family. GuaC type 2 subfamily.

The enzyme catalyses IMP + NH4(+) + NADP(+) = GMP + NADPH + 2 H(+). Its function is as follows. Catalyzes the irreversible NADPH-dependent deamination of GMP to IMP. It functions in the conversion of nucleobase, nucleoside and nucleotide derivatives of G to A nucleotides, and in maintaining the intracellular balance of A and G nucleotides. This chain is GMP reductase, found in Enterococcus faecalis (strain ATCC 700802 / V583).